The primary structure comprises 757 residues: Neutral ceramidase 2 (757 aa).

A signal peptide spans 1–25; it reads MAVSLPLFQFILFLLLLLLSRTVYA. Asn311 is a glycosylation site (N-linked (GlcNAc...) asparagine). Ser330 acts as the Nucleophile in catalysis. N-linked (GlcNAc...) asparagine glycans are attached at residues Asn348 and Asn657.

Belongs to the neutral ceramidase family.

Its subcellular location is the secreted. The protein localises to the endoplasmic reticulum. It localises to the golgi apparatus. The enzyme catalyses an N-acylsphing-4-enine + H2O = sphing-4-enine + a fatty acid. Its function is as follows. Hydrolyzes the sphingolipid ceramide into sphingosine and free fatty acid. In Arabidopsis thaliana (Mouse-ear cress), this protein is Neutral ceramidase 2.